Reading from the N-terminus, the 299-residue chain is NAD kinase (299 aa).

Catalysis depends on aspartate 71, which acts as the Proton acceptor. NAD(+) contacts are provided by residues aspartate 71–glycine 72, asparagine 145–aspartate 146, arginine 173, aspartate 175, threonine 186–serine 191, alanine 210, and glutamine 248.

This sequence belongs to the NAD kinase family. Requires a divalent metal cation as cofactor.

It localises to the cytoplasm. It carries out the reaction NAD(+) + ATP = ADP + NADP(+) + H(+). Its function is as follows. Involved in the regulation of the intracellular balance of NAD and NADP, and is a key enzyme in the biosynthesis of NADP. Catalyzes specifically the phosphorylation on 2'-hydroxyl of the adenosine moiety of NAD to yield NADP. This is NAD kinase from Bordetella bronchiseptica (strain ATCC BAA-588 / NCTC 13252 / RB50) (Alcaligenes bronchisepticus).